Consider the following 427-residue polypeptide: Adenylosuccinate synthetase (427 aa).

Residues 12 to 18 and 40 to 42 each bind GTP; these read GDEGKGK and GHT. Asp13 (proton acceptor) is an active-site residue. The Mg(2+) site is built by Asp13 and Gly40. IMP is bound by residues 13 to 16, 38 to 41, Thr128, Arg142, Gln223, Thr238, and Arg302; these read DEGK and NAGH. The active-site Proton donor is the His41. Residue 298–304 participates in substrate binding; sequence TTTGRPR. GTP is bound by residues Arg304, 330 to 332, and 412 to 414; these read SID and SVG.

The protein belongs to the adenylosuccinate synthetase family. As to quaternary structure, homodimer. Requires Mg(2+) as cofactor.

The protein localises to the cytoplasm. It catalyses the reaction IMP + L-aspartate + GTP = N(6)-(1,2-dicarboxyethyl)-AMP + GDP + phosphate + 2 H(+). It participates in purine metabolism; AMP biosynthesis via de novo pathway; AMP from IMP: step 1/2. Plays an important role in the de novo pathway of purine nucleotide biosynthesis. Catalyzes the first committed step in the biosynthesis of AMP from IMP. The chain is Adenylosuccinate synthetase from Staphylococcus epidermidis (strain ATCC 12228 / FDA PCI 1200).